The sequence spans 388 residues: Venom acid phosphatase Acph-1 (388 aa).

A signal peptide spans 1–15 (MSVIAILAMVVGVQA). His26 acts as the Nucleophile in catalysis. 2 disulfide bridges follow: Cys145–Cys355 and Cys330–Cys334. N-linked (GlcNAc...) asparagine glycans are attached at residues Asn182 and Asn228. Catalysis depends on Glu273, which acts as the Proton donor. The N-linked (GlcNAc...) asparagine glycan is linked to Asn366.

The protein belongs to the histidine acid phosphatase family. In terms of tissue distribution, expressed by the venom gland.

It is found in the secreted. It catalyses the reaction a phosphate monoester + H2O = an alcohol + phosphate. The protein is Venom acid phosphatase Acph-1 of Apis mellifera (Honeybee).